The sequence spans 165 residues: Neurotrophin-3 (165 aa).

The signal sequence occupies residues 1–3; that stretch reads IQS. A propeptide spanning residues 4–119 is cleaved from the precursor; it reads TSMDQGSLSE…VLTXTSXXXR (116 aa).

The protein belongs to the NGF-beta family.

The protein localises to the secreted. Seems to promote the survival of visceral and proprioceptive sensory neurons. In Tropidophis haetianus (Haitian dwarf boa), this protein is Neurotrophin-3 (NTF3).